Reading from the N-terminus, the 486-residue chain is Cardiolipin synthase A (486 aa).

The next 2 helical transmembrane spans lie at 3 to 23 (TVYT…IAGV) and 38 to 58 (MAWL…YLAV). 2 consecutive PLD phosphodiesterase domains span residues 219-246 (MDLR…VDPR) and 399-426 (EGGL…DMRS). Active-site residues include H224, K226, D231, H404, K406, and D411.

The protein belongs to the phospholipase D family. Cardiolipin synthase subfamily. ClsA sub-subfamily.

The protein resides in the cell inner membrane. It carries out the reaction 2 a 1,2-diacyl-sn-glycero-3-phospho-(1'-sn-glycerol) = a cardiolipin + glycerol. In terms of biological role, catalyzes the reversible phosphatidyl group transfer from one phosphatidylglycerol molecule to another to form cardiolipin (CL) (diphosphatidylglycerol) and glycerol. In Escherichia coli O157:H7 (strain EC4115 / EHEC), this protein is Cardiolipin synthase A.